Consider the following 452-residue polypeptide: Phosphoglucosamine mutase (452 aa).

S97 (phosphoserine intermediate) is an active-site residue. Residues S97, D236, D238, and D240 each contribute to the Mg(2+) site. A Phosphoserine modification is found at S97.

Belongs to the phosphohexose mutase family. Requires Mg(2+) as cofactor. Post-translationally, activated by phosphorylation.

The enzyme catalyses alpha-D-glucosamine 1-phosphate = D-glucosamine 6-phosphate. Catalyzes the conversion of glucosamine-6-phosphate to glucosamine-1-phosphate. The protein is Phosphoglucosamine mutase of Prochlorococcus marinus subsp. pastoris (strain CCMP1986 / NIES-2087 / MED4).